The following is a 291-amino-acid chain: Protease HtpX homolog (291 aa).

The next 2 membrane-spanning stretches (helical) occupy residues 4 to 24 (ILLF…VASL) and 39 to 59 (GSLL…SLLI). Position 144 (histidine 144) interacts with Zn(2+). The active site involves glutamate 145. Zn(2+) is bound at residue histidine 148. The next 2 membrane-spanning stretches (helical) occupy residues 159–179 (LIQG…AFAI) and 199–219 (ITTV…VAWF). Glutamate 224 lines the Zn(2+) pocket.

It belongs to the peptidase M48B family. Zn(2+) serves as cofactor.

The protein resides in the cell inner membrane. The chain is Protease HtpX homolog from Albidiferax ferrireducens (strain ATCC BAA-621 / DSM 15236 / T118) (Rhodoferax ferrireducens).